The primary structure comprises 218 residues: Hypoxanthine-guanine phosphoribosyltransferase (218 aa).

Residue lysine 69 participates in GMP binding. Residue lysine 103 is modified to N6-acetyllysine. Lysine 115 participates in a covalent cross-link: Glycyl lysine isopeptide (Lys-Gly) (interchain with G-Cter in SUMO1); alternate. Lysine 115 participates in a covalent cross-link: Glycyl lysine isopeptide (Lys-Gly) (interchain with G-Cter in SUMO2); alternate. Residues 134–142 (EDIIDTGKT), lysine 166, 186–188 (KFV), and aspartate 194 contribute to the GMP site. Aspartate 138 serves as the catalytic Proton acceptor. Threonine 142 is modified (phosphothreonine). Aspartate 194 serves as a coordination point for Mg(2+).

Belongs to the purine/pyrimidine phosphoribosyltransferase family. As to quaternary structure, homotetramer. Mg(2+) serves as cofactor.

Its subcellular location is the cytoplasm. It carries out the reaction IMP + diphosphate = hypoxanthine + 5-phospho-alpha-D-ribose 1-diphosphate. The catalysed reaction is GMP + diphosphate = guanine + 5-phospho-alpha-D-ribose 1-diphosphate. Its pathway is purine metabolism; IMP biosynthesis via salvage pathway; IMP from hypoxanthine: step 1/1. In terms of biological role, converts guanine to guanosine monophosphate, and hypoxanthine to inosine monophosphate. Transfers the 5-phosphoribosyl group from 5-phosphoribosylpyrophosphate onto the purine. Plays a central role in the generation of purine nucleotides through the purine salvage pathway. The chain is Hypoxanthine-guanine phosphoribosyltransferase (Hprt1) from Rattus norvegicus (Rat).